The primary structure comprises 71 residues: Long neurotoxin 1 (71 aa).

Disulfide bonds link C3–C20, C14–C41, C26–C30, C45–C56, and C57–C62.

It belongs to the three-finger toxin family. Long-chain subfamily. Type II alpha-neurotoxin sub-subfamily. Expressed by the venom gland.

The protein resides in the secreted. Its function is as follows. Binds with high affinity to muscular (alpha-1/CHRNA1) and neuronal (alpha-7/CHRNA7) nicotinic acetylcholine receptor (nAChR) and hinders acetylcholine binding to the receptor, thereby impairing neuromuscular and neuronal transmission. This is Long neurotoxin 1 from Naja annulata annulata (Banded water cobra).